The sequence spans 349 residues: MEPTSGFAEQPGPVKAESEEQEPAQWQALPVLSEQQSGAVELILAYAAPVLDKRQTSRLLREVSAVYPLPAQPHLKRVRPSRSAGGAQSSDLLLCLAGPSAGPRSLAELLPRPAVDPRGLGTPFLVPVPARPPLTRSQFEEARAHWPTSFHEDKQVTSALAGQLFSTQERAAMQTHMERAVCAAQRAAAQGLRAVGAVVVDPASDRVLATGHDCSSVASPLLHAVMVCIDLVAQGQGRGSCDLRSHPACSFTQATATQGARAGSVRKLDEDSLPYVCTGYDLYVTREPCVMCAMALVHARIQRVFYGAPSPDGALGTLFRVHARPDLNHRFQVFRGILEDQCRQLDPDP.

Residue Met1 is modified to N-acetylmethionine. The tract at residues 1-25 is disordered; that stretch reads MEPTSGFAEQPGPVKAESEEQEPAQ. One can recognise a CMP/dCMP-type deaminase domain in the interval 171 to 334; the sequence is AAMQTHMERA…PDLNHRFQVF (164 aa). His223, Cys289, and Cys292 together coordinate Zn(2+).

This sequence belongs to the cytidine and deoxycytidylate deaminase family. ADAT3 subfamily. Zn(2+) is required as a cofactor.

In Mus musculus (Mouse), this protein is Probable inactive tRNA-specific adenosine deaminase-like protein 3 (Adat3).